Reading from the N-terminus, the 218-residue chain is Small ribosomal subunit protein uS3c (218 aa).

Residues 47–118 (VQKNIRISSG…KLNIAITRIS (72 aa)) form the KH type-2 domain.

It belongs to the universal ribosomal protein uS3 family. As to quaternary structure, part of the 30S ribosomal subunit.

The protein localises to the plastid. It is found in the chloroplast. This is Small ribosomal subunit protein uS3c (rps3) from Nasturtium officinale (Watercress).